Consider the following 103-residue polypeptide: MQKIRKGDSVVVLSGKDKGRKGEVLKVMPKDEQALVSGINIVKRHQRQTQTQEAGIISKEAPIHLSNLAIADPKDGKPTRVGFRVEDGKKVRVAKRSGALIDG.

This sequence belongs to the universal ribosomal protein uL24 family. In terms of assembly, part of the 50S ribosomal subunit.

In terms of biological role, one of two assembly initiator proteins, it binds directly to the 5'-end of the 23S rRNA, where it nucleates assembly of the 50S subunit. One of the proteins that surrounds the polypeptide exit tunnel on the outside of the subunit. This Brucella abortus (strain S19) protein is Large ribosomal subunit protein uL24.